The primary structure comprises 366 residues: Methyltransferase phm5 (366 aa).

S-adenosyl-L-methionine-binding positions include 204-205 (GG), D230, 255-256 (SM), R273, and R274.

It belongs to the class I-like SAM-binding methyltransferase superfamily. Cation-independent O-methyltransferase family.

The protein operates within secondary metabolite biosynthesis. Its function is as follows. Methyltransferase; part of the gene cluster that mediates the biosynthesis of the trans-fused decalin-containing tetramic acid phomasetin, the stereochemical opposite of the HIV-1 integrase inhibitor equisetin. The PKS module of phm1 together with the enoylreductase phm4 catalyze the formation of the polyketide unit which is then conjugated to L-serine by the condensation domain of the phm1 NRPS module. Activity of the Dieckmann cyclase domain (RED) of phm1 results in release of the Dieckmann product intermediate. The Diels-Alderase phm7 then uses the Dieckmann product of phm1 as substrate and catalyzes the Diels-Alder cycloaddition to form the decalin ring of N-desmethylphomasetin. N-desmethylphomasetin is further methylated to phomasetin by the methyltransferase phm5. The protein is Methyltransferase phm5 of Pyrenochaetopsis sp.